Consider the following 288-residue polypeptide: PAK4-inhibitor inka2 (288 aa).

An inka box region spans residues D159–E196.

The protein belongs to the INKA family.

It localises to the nucleus. Inhibitor of the serine/threonine-protein kinase pak4/pak5. Acts by binding pak4/pak5 in a substrate-like manner, inhibiting the protein kinase activity. The protein is PAK4-inhibitor inka2 of Danio rerio (Zebrafish).